The chain runs to 766 residues: ABC-type oligopeptide transporter ABCB9 (766 aa).

8 consecutive transmembrane segments (helical) span residues 7-27 (VVVT…IYVF), 47-67 (VLDL…ATIG), 84-104 (LVIT…LLLF), 116-136 (FWAL…LWWL), 185-205 (VAFL…ETFL), 225-245 (FSTA…AAGI), 319-339 (VFMF…FPII), and 416-436 (SGLT…HLVI). Residues 188 to 471 (LVAASFFLIV…VGSVYSGLMQ (284 aa)) enclose the ABC transmembrane type-1 domain. An ABC transporter domain is found at 504-740 (VDFENVTFTY…GGLYAKLVQR (237 aa)). 539 to 546 (GPSGSGKS) provides a ligand contact to ATP.

Belongs to the ABC transporter superfamily. ABCB family. MHC peptide exporter (TC 3.A.1.209) subfamily. In terms of assembly, homodimer. Interacts (via TMD0 region) with LAMP1; this interaction strongly stabilizes ABCB9 and protects ABCB9 against lysosomal degradation. Interacts (via TMD0 region) with LAMP2 (isoform LAMP-2B). Interacts (via TMD0) with YIF1B; this interaction allows (but is not essential) the ER-to-Golgi trafficking and strongly depends on a salt bridge within TMD0. Highly expressed in testis, and at moderate levels in brain, spinal cord, and thyroid. Not expressed in monocytes but strongly expressed during differentiation of monocytes to dendritic cells and macrophages.

It localises to the lysosome membrane. It catalyses the reaction a [oligopeptide](in) + ATP + H2O = a [oligopeptide](out) + ADP + phosphate + H(+). Its activity is regulated as follows. Transport activity is limited by threshold levels of luminal peptide. ATP hydrolysis is reduced in the presence of the spatial challenging 18-mer peptide by 50% and the branched 16-mer peptide by 75%. Transport rate of the longer peptides is strongly reduced. In terms of biological role, ATP-dependent low-affinity peptide transporter which translocates a broad spectrum of peptides from the cytosol to the lysosomal lumen for degradation. Displays a broad peptide length specificity from 6-mer up to at least 59-mer peptides with an optimum of 23-mers. Binds and transports smaller and larger peptides with the same affinity. Favors positively charged, aromatic or hydrophobic residues in the N- and C-terminal positions whereas negatively charged residues as well as asparagine and methionine are not favored. The polypeptide is ABC-type oligopeptide transporter ABCB9 (Homo sapiens (Human)).